Consider the following 629-residue polypeptide: tRNA uridine 5-carboxymethylaminomethyl modification enzyme MnmG (629 aa).

FAD-binding positions include 13-18 (GGGHAG), Val125, and Ser180. 273–287 (GPRYCPSIEDKVMRF) is an NAD(+) binding site. Gln370 provides a ligand contact to FAD.

The protein belongs to the MnmG family. As to quaternary structure, homodimer. Heterotetramer of two MnmE and two MnmG subunits. The cofactor is FAD.

Its subcellular location is the cytoplasm. Functionally, NAD-binding protein involved in the addition of a carboxymethylaminomethyl (cmnm) group at the wobble position (U34) of certain tRNAs, forming tRNA-cmnm(5)s(2)U34. The chain is tRNA uridine 5-carboxymethylaminomethyl modification enzyme MnmG from Salmonella typhi.